Consider the following 860-residue polypeptide: Leucine--tRNA ligase (860 aa).

A 'HIGH' region motif is present at residues 42 to 52; the sequence is PYPSGRLHMGH. Positions 619–623 match the 'KMSKS' region motif; sequence KMSKS. Lys-622 contacts ATP.

This sequence belongs to the class-I aminoacyl-tRNA synthetase family.

It localises to the cytoplasm. The catalysed reaction is tRNA(Leu) + L-leucine + ATP = L-leucyl-tRNA(Leu) + AMP + diphosphate. The chain is Leucine--tRNA ligase from Escherichia coli O81 (strain ED1a).